Reading from the N-terminus, the 573-residue chain is Urease subunit alpha 2 (573 aa).

The Urease domain maps to 136–573 (GAIDAHVHLI…LPMAQRYFLF (438 aa)). Ni(2+) is bound by residues histidine 141, histidine 143, and lysine 224. Lysine 224 is subject to N6-carboxylysine. Histidine 226 provides a ligand contact to substrate. Residues histidine 253 and histidine 279 each coordinate Ni(2+). Residue histidine 327 is the Proton donor of the active site. Aspartate 367 provides a ligand contact to Ni(2+).

It belongs to the metallo-dependent hydrolases superfamily. Urease alpha subunit family. In terms of assembly, may form a heterohexamer of 3 UreC (alpha) and 3 UreAB (gamma/beta) subunits. May also form a heterotrimer of UreA (gamma), UreB (beta) and UreC (alpha) subunits. Three heterotrimers associate to form the active enzyme. The cofactor is Ni cation. In terms of processing, carboxylation allows a single lysine to coordinate two nickel ions.

It localises to the cytoplasm. It carries out the reaction urea + 2 H2O + H(+) = hydrogencarbonate + 2 NH4(+). The protein operates within nitrogen metabolism; urea degradation; CO(2) and NH(3) from urea (urease route): step 1/1. This chain is Urease subunit alpha 2, found in Streptomyces avermitilis (strain ATCC 31267 / DSM 46492 / JCM 5070 / NBRC 14893 / NCIMB 12804 / NRRL 8165 / MA-4680).